The primary structure comprises 115 residues: Large ribosomal subunit protein bL20 (115 aa).

The protein belongs to the bacterial ribosomal protein bL20 family.

Its function is as follows. Binds directly to 23S ribosomal RNA and is necessary for the in vitro assembly process of the 50S ribosomal subunit. It is not involved in the protein synthesizing functions of that subunit. The protein is Large ribosomal subunit protein bL20 of Bdellovibrio bacteriovorus (strain ATCC 15356 / DSM 50701 / NCIMB 9529 / HD100).